Consider the following 44-residue polypeptide: Antifungal protein R (44 aa).

The protein belongs to the thaumatin family.

In terms of biological role, has antifungal activity. Inhibits the growth of Trichoderma viridae and Candida albicans. This Hordeum vulgare (Barley) protein is Antifungal protein R.